The primary structure comprises 143 residues: Large ribosomal subunit protein uL13 (143 aa).

This sequence belongs to the universal ribosomal protein uL13 family. As to quaternary structure, part of the 50S ribosomal subunit.

In terms of biological role, this protein is one of the early assembly proteins of the 50S ribosomal subunit, although it is not seen to bind rRNA by itself. It is important during the early stages of 50S assembly. The chain is Large ribosomal subunit protein uL13 from Thermoanaerobacter pseudethanolicus (strain ATCC 33223 / 39E) (Clostridium thermohydrosulfuricum).